Reading from the N-terminus, the 147-residue chain is Myoglobin (147 aa).

In terms of domain architecture, Globin spans 2-141; it reads ADFDAVLKCW…IIADLEANYK (140 aa). Position 60 (His60) interacts with nitrite. His60 serves as a coordination point for O2. Position 89 (His89) interacts with heme b.

This sequence belongs to the globin family. In terms of assembly, monomeric.

It localises to the cytoplasm. Its subcellular location is the sarcoplasm. It catalyses the reaction Fe(III)-heme b-[protein] + nitric oxide + H2O = Fe(II)-heme b-[protein] + nitrite + 2 H(+). The enzyme catalyses H2O2 + AH2 = A + 2 H2O. Its function is as follows. Monomeric heme protein which primary function is to store oxygen and facilitate its diffusion within muscle tissues. Reversibly binds oxygen through a pentacoordinated heme iron and enables its timely and efficient release as needed during periods of heightened demand. Depending on the oxidative conditions of tissues and cells, and in addition to its ability to bind oxygen, it also has a nitrite reductase activity whereby it regulates the production of bioactive nitric oxide. Under stress conditions, like hypoxia and anoxia, it also protects cells against reactive oxygen species thanks to its pseudoperoxidase activity. The sequence is that of Myoglobin (mb) from Thunnus obesus (Bigeye tuna).